A 168-amino-acid polypeptide reads, in one-letter code: Lipoprotein signal peptidase (168 aa).

Helical transmembrane passes span 12 to 32 (WYWV…WVLA), 67 to 87 (WQRW…TIWL), and 93 to 113 (NMVR…GNLI). Residues D123 and D141 contribute to the active site. A helical membrane pass occupies residues 136 to 156 (AFNIADAAIFIGAVLIIIDSF).

Belongs to the peptidase A8 family.

Its subcellular location is the cell inner membrane. The enzyme catalyses Release of signal peptides from bacterial membrane prolipoproteins. Hydrolyzes -Xaa-Yaa-Zaa-|-(S,diacylglyceryl)Cys-, in which Xaa is hydrophobic (preferably Leu), and Yaa (Ala or Ser) and Zaa (Gly or Ala) have small, neutral side chains.. It participates in protein modification; lipoprotein biosynthesis (signal peptide cleavage). Functionally, this protein specifically catalyzes the removal of signal peptides from prolipoproteins. The chain is Lipoprotein signal peptidase from Shewanella amazonensis (strain ATCC BAA-1098 / SB2B).